The chain runs to 434 residues: MLKLSSSQPDFAERLKALLAFETAQDPAVDAAVASICADVHHRGDAALVEHTNRFDRMQAAGMADLTLSREQLEAAWLRLPADVRDALSAAAERVRRYHEKQLAHSWSYEDEDGTLLGQQVTPLDRVGIYVPGGKAAYPSSVLMNALPAKVAGVGEIIMVVPTPGGERNDLVLAAAYIAGVDKVFTVGGAQAVAALAYGTETVPQVDKITGPGNAYVAAAKRRVFGVVGIDMVAGPSEILVICDGATDPDWVAMDLFSQAEHDEIAQAILLCPSADYIAQVEASIAKLLPSMPRRAIIEASLAGRGALIQVSDLAEACEISNYIAPEHLELSVADPDALLPQLRHAGAIFMGRFTSESLGDYCAGPNHVLPTSRTARFASPLGVYDFQKRSSLIRVSQAGAQKLGRIASLLAHGEGLTAHARAAELRLEDGTPR.

NAD(+) is bound by residues Y130, Q191, and N214. 3 residues coordinate substrate: S237, Q259, and H262. Residues Q259 and H262 each contribute to the Zn(2+) site. Active-site proton acceptor residues include E327 and H328. H328, D361, E415, and H420 together coordinate substrate. Position 361 (D361) interacts with Zn(2+). Residue H420 coordinates Zn(2+).

Belongs to the histidinol dehydrogenase family. Requires Zn(2+) as cofactor.

The enzyme catalyses L-histidinol + 2 NAD(+) + H2O = L-histidine + 2 NADH + 3 H(+). It participates in amino-acid biosynthesis; L-histidine biosynthesis; L-histidine from 5-phospho-alpha-D-ribose 1-diphosphate: step 9/9. Catalyzes the sequential NAD-dependent oxidations of L-histidinol to L-histidinaldehyde and then to L-histidine. The chain is Histidinol dehydrogenase from Chromobacterium violaceum (strain ATCC 12472 / DSM 30191 / JCM 1249 / CCUG 213 / NBRC 12614 / NCIMB 9131 / NCTC 9757 / MK).